The chain runs to 197 residues: dTTP/UTP pyrophosphatase (197 aa).

Aspartate 70 acts as the Proton acceptor in catalysis.

Belongs to the Maf family. YhdE subfamily. It depends on a divalent metal cation as a cofactor.

The protein resides in the cytoplasm. The enzyme catalyses dTTP + H2O = dTMP + diphosphate + H(+). The catalysed reaction is UTP + H2O = UMP + diphosphate + H(+). Functionally, nucleoside triphosphate pyrophosphatase that hydrolyzes dTTP and UTP. May have a dual role in cell division arrest and in preventing the incorporation of modified nucleotides into cellular nucleic acids. This chain is dTTP/UTP pyrophosphatase (yceF2), found in Salmonella choleraesuis (strain SC-B67).